The following is a 142-amino-acid chain: Multiprotein-bridging factor 1b (142 aa).

Residues 49-75 form a disordered region; the sequence is NAGSNKAASSGTSLNTKKLDDDTENLS. The segment covering 50 to 64 has biased composition (polar residues); sequence AGSNKAASSGTSLNT. Over residues 65 to 75 the composition is skewed to basic and acidic residues; sequence KKLDDDTENLS. One can recognise an HTH cro/C1-type domain in the interval 87-141; it reads IMQARGEKKLTQSQLAHLINEKPQVIQEYESGKAIPNQQILSKLERALGAKLRGK. The segment at residues 98 to 117 is a DNA-binding region (H-T-H motif); it reads QSQLAHLINEKPQVIQEYES.

This sequence belongs to the MBF1 family. Expressed in leaves, roots, stems, petioles and shoots. Higher expression in flowers and siliques. Detected in leaf veins through development.

Its subcellular location is the nucleus. The protein localises to the nucleolus. In terms of biological role, transcriptional coactivator that stimulates transcriptional activity by bridging regulatory proteins and TBP, thereby recruiting TBP to promoters occupied by DNA-binding regulators. The sequence is that of Multiprotein-bridging factor 1b (MBF1B) from Arabidopsis thaliana (Mouse-ear cress).